Consider the following 436-residue polypeptide: UDP-N-acetylmuramate--L-alanine ligase (436 aa).

An ATP-binding site is contributed by 108 to 114 (GAHGKTS).

This sequence belongs to the MurCDEF family.

It is found in the cytoplasm. The catalysed reaction is UDP-N-acetyl-alpha-D-muramate + L-alanine + ATP = UDP-N-acetyl-alpha-D-muramoyl-L-alanine + ADP + phosphate + H(+). Its pathway is cell wall biogenesis; peptidoglycan biosynthesis. Cell wall formation. This chain is UDP-N-acetylmuramate--L-alanine ligase, found in Bacillus cereus (strain G9842).